Reading from the N-terminus, the 422-residue chain is Glutamate-1-semialdehyde 2,1-aminomutase (422 aa).

Lysine 258 is subject to N6-(pyridoxal phosphate)lysine.

The protein belongs to the class-III pyridoxal-phosphate-dependent aminotransferase family. HemL subfamily. In terms of assembly, homodimer. Pyridoxal 5'-phosphate serves as cofactor.

Its subcellular location is the cytoplasm. It catalyses the reaction (S)-4-amino-5-oxopentanoate = 5-aminolevulinate. It functions in the pathway porphyrin-containing compound metabolism; protoporphyrin-IX biosynthesis; 5-aminolevulinate from L-glutamyl-tRNA(Glu): step 2/2. In Chlamydia trachomatis serovar L2 (strain ATCC VR-902B / DSM 19102 / 434/Bu), this protein is Glutamate-1-semialdehyde 2,1-aminomutase.